Consider the following 115-residue polypeptide: DNA-binding protein PYRAB09250 (115 aa).

Belongs to the PDCD5 family.

The sequence is that of DNA-binding protein PYRAB09250 from Pyrococcus abyssi (strain GE5 / Orsay).